Reading from the N-terminus, the 274-residue chain is 2,3,4,5-tetrahydropyridine-2,6-dicarboxylate N-succinyltransferase (274 aa).

2 residues coordinate substrate: Arg104 and Asp141.

Belongs to the transferase hexapeptide repeat family. As to quaternary structure, homotrimer.

The protein resides in the cytoplasm. The catalysed reaction is (S)-2,3,4,5-tetrahydrodipicolinate + succinyl-CoA + H2O = (S)-2-succinylamino-6-oxoheptanedioate + CoA. The protein operates within amino-acid biosynthesis; L-lysine biosynthesis via DAP pathway; LL-2,6-diaminopimelate from (S)-tetrahydrodipicolinate (succinylase route): step 1/3. The sequence is that of 2,3,4,5-tetrahydropyridine-2,6-dicarboxylate N-succinyltransferase from Shewanella sp. (strain ANA-3).